The sequence spans 479 residues: Alliin lyase (479 aa).

The N-terminal stretch at methionine 1–serine 25 is a signal peptide. The propeptide occupies phenylalanine 26 to alanine 34. The 47-residue stretch at glutamate 47–alanine 93 folds into the EGF-like; atypical domain. Asparagine 53 is a glycosylation site (N-linked (GlcNAc...) asparagine). 3 disulfides stabilise this stretch: cysteine 54/cysteine 73, cysteine 75/cysteine 84, and cysteine 78/cysteine 91. Tyrosine 126–phenylalanine 134 lines the chloride pocket. N-linked (GlcNAc...) asparagine glycosylation is found at asparagine 180 and asparagine 225. N6-(pyridoxal phosphate)lysine is present on lysine 285. Residues asparagine 342 and asparagine 362 are each glycosylated (N-linked (GlcNAc...) asparagine). Cysteines 402 and 410 form a disulfide.

The protein belongs to the alliinase family. In terms of assembly, homodimer. The cofactor is pyridoxal 5'-phosphate.

It is found in the vacuole. It catalyses the reaction an S-alkyl-L-cysteine S-oxide = an S-alkyl sulfenate + 2-aminoprop-2-enoate. The chain is Alliin lyase from Allium cepa (Onion).